A 129-amino-acid chain; its full sequence is Small ribosomal subunit protein uS11 (129 aa).

It belongs to the universal ribosomal protein uS11 family. As to quaternary structure, part of the 30S ribosomal subunit. Interacts with proteins S7 and S18. Binds to IF-3.

Located on the platform of the 30S subunit, it bridges several disparate RNA helices of the 16S rRNA. Forms part of the Shine-Dalgarno cleft in the 70S ribosome. This Bacillus cytotoxicus (strain DSM 22905 / CIP 110041 / 391-98 / NVH 391-98) protein is Small ribosomal subunit protein uS11.